Consider the following 274-residue polypeptide: Large ribosomal subunit protein uL2 (274 aa).

Disordered regions lie at residues 28-54 (APHA…TRHI) and 224-274 (VAMN…RRRK). Residues 263–274 (KRTDKMIVRRRK) are compositionally biased toward basic and acidic residues.

Belongs to the universal ribosomal protein uL2 family. Part of the 50S ribosomal subunit. Forms a bridge to the 30S subunit in the 70S ribosome.

Functionally, one of the primary rRNA binding proteins. Required for association of the 30S and 50S subunits to form the 70S ribosome, for tRNA binding and peptide bond formation. It has been suggested to have peptidyltransferase activity; this is somewhat controversial. Makes several contacts with the 16S rRNA in the 70S ribosome. The polypeptide is Large ribosomal subunit protein uL2 (Pseudomonas syringae pv. tomato (strain ATCC BAA-871 / DC3000)).